We begin with the raw amino-acid sequence, 146 residues long: Hut operon positive regulatory protein (146 aa).

This sequence belongs to the HutP family. In terms of assembly, homohexamer.

Functionally, antiterminator that binds to cis-acting regulatory sequences on the mRNA in the presence of histidine, thereby suppressing transcription termination and activating the hut operon for histidine utilization. The sequence is that of Hut operon positive regulatory protein from Bacillus cytotoxicus (strain DSM 22905 / CIP 110041 / 391-98 / NVH 391-98).